The primary structure comprises 370 residues: tRNA-specific 2-thiouridylase MnmA (370 aa).

ATP is bound by residues 24 to 31 (AMSGGVDS) and Leu50. Cys119 acts as the Nucleophile in catalysis. A disulfide bridge links Cys119 with Cys215. Gly143 is an ATP binding site. The interaction with tRNA stretch occupies residues 165 to 167 (KDQ). The active-site Cysteine persulfide intermediate is the Cys215.

Belongs to the MnmA/TRMU family.

Its subcellular location is the cytoplasm. The catalysed reaction is S-sulfanyl-L-cysteinyl-[protein] + uridine(34) in tRNA + AH2 + ATP = 2-thiouridine(34) in tRNA + L-cysteinyl-[protein] + A + AMP + diphosphate + H(+). In terms of biological role, catalyzes the 2-thiolation of uridine at the wobble position (U34) of tRNA, leading to the formation of s(2)U34. The sequence is that of tRNA-specific 2-thiouridylase MnmA from Wolbachia pipientis wMel.